The sequence spans 715 residues: Gelsolin, cytoplasmic (715 aa).

Residues 1-124 (MTTELEIQKA…YLIGGVASGF (124 aa)) are actin-severing. A Gelsolin-like 1 repeat occupies 24–75 (FELVPVPKTNHGKFYTGDSYIILKTTALESGRGFEWNLHYWQGKESSQDERG). Residues 72-75 (DERG) are actin-actin interfilament contact point. 136 to 145 (KVLTRVKGKR) contributes to the a 1,2-diacyl-sn-glycero-3-phospho-(1D-myo-inositol-4,5-bisphosphate) binding site. Gelsolin-like repeat units follow at residues 147 to 187 (VRAT…FEKN), 260 to 306 (LKIT…TERA), and 405 to 451 (LRKE…NERT). An actin-binding, Ca-sensitive region spans residues 384–715 (AAESKMIDDG…FLGWDKTLWD (332 aa)). Ca(2+) contacts are provided by Gly421, Asp422, Glu449, Thr499, Asn539, Asp540, Glu562, Asp642, and Glu665. 2 Gelsolin-like repeats span residues 524–564 (CRAV…SEIQ) and 625–667 (FIAE…EEKM).

Belongs to the villin/gelsolin family. In terms of tissue distribution, predominantly in the body wall muscle, but expression is not restricted to muscle cells.

It is found in the cytoplasm. The protein localises to the cytoskeleton. Calcium-regulated, actin-modulating protein that binds to the plus (or barbed) ends of actin monomers or filaments, preventing monomer exchange (end-blocking or capping). It can promote the assembly of monomers into filaments (nucleation) as well as sever filaments already formed. This is Gelsolin, cytoplasmic from Halocynthia roretzi (Sea squirt).